The following is a 482-amino-acid chain: Probable glycine dehydrogenase (decarboxylating) subunit 2 (482 aa).

Residue lysine 267 is modified to N6-(pyridoxal phosphate)lysine.

Belongs to the GcvP family. C-terminal subunit subfamily. The glycine cleavage system is composed of four proteins: P, T, L and H. In this organism, the P 'protein' is a heterodimer of two subunits. The cofactor is pyridoxal 5'-phosphate.

The catalysed reaction is N(6)-[(R)-lipoyl]-L-lysyl-[glycine-cleavage complex H protein] + glycine + H(+) = N(6)-[(R)-S(8)-aminomethyldihydrolipoyl]-L-lysyl-[glycine-cleavage complex H protein] + CO2. The glycine cleavage system catalyzes the degradation of glycine. The P protein binds the alpha-amino group of glycine through its pyridoxal phosphate cofactor; CO(2) is released and the remaining methylamine moiety is then transferred to the lipoamide cofactor of the H protein. This Aquifex aeolicus (strain VF5) protein is Probable glycine dehydrogenase (decarboxylating) subunit 2.